The sequence spans 384 residues: Dual-specificity RNA methyltransferase RlmN (384 aa).

Glu-105 functions as the Proton acceptor in the catalytic mechanism. Residues 111 to 350 (EDDRATLCVS…TIVRKTRGDD (240 aa)) form the Radical SAM core domain. A disulfide bridge connects residues Cys-118 and Cys-355. [4Fe-4S] cluster is bound by residues Cys-125, Cys-129, and Cys-132. Residues 179 to 180 (GE), Ser-211, 233 to 235 (SLH), and Asn-312 each bind S-adenosyl-L-methionine. The active-site S-methylcysteine intermediate is the Cys-355.

This sequence belongs to the radical SAM superfamily. RlmN family. [4Fe-4S] cluster is required as a cofactor.

It is found in the cytoplasm. It catalyses the reaction adenosine(2503) in 23S rRNA + 2 reduced [2Fe-2S]-[ferredoxin] + 2 S-adenosyl-L-methionine = 2-methyladenosine(2503) in 23S rRNA + 5'-deoxyadenosine + L-methionine + 2 oxidized [2Fe-2S]-[ferredoxin] + S-adenosyl-L-homocysteine. It carries out the reaction adenosine(37) in tRNA + 2 reduced [2Fe-2S]-[ferredoxin] + 2 S-adenosyl-L-methionine = 2-methyladenosine(37) in tRNA + 5'-deoxyadenosine + L-methionine + 2 oxidized [2Fe-2S]-[ferredoxin] + S-adenosyl-L-homocysteine. Functionally, specifically methylates position 2 of adenine 2503 in 23S rRNA and position 2 of adenine 37 in tRNAs. m2A2503 modification seems to play a crucial role in the proofreading step occurring at the peptidyl transferase center and thus would serve to optimize ribosomal fidelity. This chain is Dual-specificity RNA methyltransferase RlmN, found in Shigella flexneri serotype 5b (strain 8401).